A 199-amino-acid chain; its full sequence is Putative DNA-directed RNA polymerase subunit L376 (199 aa).

This sequence belongs to the eukaryotic RPB7/RPC8 RNA polymerase subunit family.

It localises to the virion. The enzyme catalyses RNA(n) + a ribonucleoside 5'-triphosphate = RNA(n+1) + diphosphate. In Acanthamoeba polyphaga (Amoeba), this protein is Putative DNA-directed RNA polymerase subunit L376.